The sequence spans 289 residues: NADPH-dependent 7-cyano-7-deazaguanine reductase (289 aa).

81–83 is a substrate binding site; it reads IES. Position 83–84 (83–84) interacts with NADPH; that stretch reads SK. Cysteine 196 functions as the Thioimide intermediate in the catalytic mechanism. Aspartate 203 serves as the catalytic Proton donor. 235 to 236 provides a ligand contact to substrate; it reads HE. 264–265 contributes to the NADPH binding site; the sequence is RG.

This sequence belongs to the GTP cyclohydrolase I family. QueF type 2 subfamily. In terms of assembly, homodimer.

The protein localises to the cytoplasm. It catalyses the reaction 7-aminomethyl-7-carbaguanine + 2 NADP(+) = 7-cyano-7-deazaguanine + 2 NADPH + 3 H(+). The protein operates within tRNA modification; tRNA-queuosine biosynthesis. Its function is as follows. Catalyzes the NADPH-dependent reduction of 7-cyano-7-deazaguanine (preQ0) to 7-aminomethyl-7-deazaguanine (preQ1). This Albidiferax ferrireducens (strain ATCC BAA-621 / DSM 15236 / T118) (Rhodoferax ferrireducens) protein is NADPH-dependent 7-cyano-7-deazaguanine reductase.